The sequence spans 323 residues: Acetyl-coenzyme A carboxylase carboxyl transferase subunit alpha (323 aa).

The region spanning 40–293 (LSEKSLQLTK…RKALSDSLKT (254 aa)) is the CoA carboxyltransferase C-terminal domain.

This sequence belongs to the AccA family. As to quaternary structure, acetyl-CoA carboxylase is a heterohexamer composed of biotin carboxyl carrier protein (AccB), biotin carboxylase (AccC) and two subunits each of ACCase subunit alpha (AccA) and ACCase subunit beta (AccD).

It is found in the cytoplasm. It catalyses the reaction N(6)-carboxybiotinyl-L-lysyl-[protein] + acetyl-CoA = N(6)-biotinyl-L-lysyl-[protein] + malonyl-CoA. The protein operates within lipid metabolism; malonyl-CoA biosynthesis; malonyl-CoA from acetyl-CoA: step 1/1. In terms of biological role, component of the acetyl coenzyme A carboxylase (ACC) complex. First, biotin carboxylase catalyzes the carboxylation of biotin on its carrier protein (BCCP) and then the CO(2) group is transferred by the carboxyltransferase to acetyl-CoA to form malonyl-CoA. This Polynucleobacter asymbioticus (strain DSM 18221 / CIP 109841 / QLW-P1DMWA-1) (Polynucleobacter necessarius subsp. asymbioticus) protein is Acetyl-coenzyme A carboxylase carboxyl transferase subunit alpha.